The sequence spans 428 residues: GTPase Obg (428 aa).

One can recognise an Obg domain in the interval 1 to 158 (MFVDQVKIYV…RDVILELKVL (158 aa)). Residues 159 to 329 (ADVGLVGFPS…LLFEVANLIE (171 aa)) form the OBG-type G domain. GTP is bound by residues 165 to 172 (GFPSVGKS), 190 to 194 (FTTIV), 212 to 215 (DLPG), 282 to 285 (NKMD), and 310 to 312 (SAV). Residues S172 and T192 each coordinate Mg(2+). The region spanning 350–428 (KFETEGVKFD…ILEYEFEFID (79 aa)) is the OCT domain.

This sequence belongs to the TRAFAC class OBG-HflX-like GTPase superfamily. OBG GTPase family. As to quaternary structure, monomer. Requires Mg(2+) as cofactor.

Its subcellular location is the cytoplasm. In terms of biological role, an essential GTPase which binds GTP, GDP and possibly (p)ppGpp with moderate affinity, with high nucleotide exchange rates and a fairly low GTP hydrolysis rate. Plays a role in control of the cell cycle, stress response, ribosome biogenesis and in those bacteria that undergo differentiation, in morphogenesis control. This chain is GTPase Obg, found in Bacillus thuringiensis (strain Al Hakam).